We begin with the raw amino-acid sequence, 427 residues long: MLETVEKDKDVNAMMLEIGRRAKAAARPLATASAERKHAALVAMAGVIVTRTAEILAANALDLENARESGVASAFIDRLTLTESRIRDMADGIRAIAELIDPVGEVISEWDRPNGLHIERVRTPLGVIGVIYESRPNVTADAGALCLKAGNAVILRGGSDSFHSSRAIHACLTEGLKVAGLPEDAIQMVPVADRAAVGAMLTGLNGAIDVIVPRGGKSLVARVQNEARVPVFAHLEGLCHIYVDASADRDMAKKIVVNAKMRRTGICGAAETLLIDRNAAEKFAKPLLEALVDAGCEVRASDDLASVMPGLKAATDEDWATEYLDAIISARLVDGISGAIEHINTWSSAHTEAVIAEDPAVVERFFSEIDSAILLHNASTQFADGGEFGMGGEIGIATGKMHARGPVGVEQLTSFKYRVRGTGQVRP.

It belongs to the gamma-glutamyl phosphate reductase family.

The protein resides in the cytoplasm. It catalyses the reaction L-glutamate 5-semialdehyde + phosphate + NADP(+) = L-glutamyl 5-phosphate + NADPH + H(+). It functions in the pathway amino-acid biosynthesis; L-proline biosynthesis; L-glutamate 5-semialdehyde from L-glutamate: step 2/2. Functionally, catalyzes the NADPH-dependent reduction of L-glutamate 5-phosphate into L-glutamate 5-semialdehyde and phosphate. The product spontaneously undergoes cyclization to form 1-pyrroline-5-carboxylate. This chain is Gamma-glutamyl phosphate reductase, found in Rhizobium meliloti (strain 1021) (Ensifer meliloti).